The sequence spans 434 residues: Probable phosphatidylinositol 3,4,5-trisphosphate 3-phosphatase TEP1 (434 aa).

A Phosphatase tensin-type domain is found at 33 to 255 (KTKNDIGLRL…RYHEFFITHE (223 aa)). The Phosphocysteine intermediate role is filled by Cys-193.

It carries out the reaction a 1,2-diacyl-sn-glycero-3-phospho-(1D-myo-inositol-3,4,5-trisphosphate) + H2O = a 1,2-diacyl-sn-glycero-3-phospho-(1D-myo-inositol-4,5-bisphosphate) + phosphate. May act as a phosphoinositide 3-phosphatase by regulating PtdIns(3,4,5)P3 levels. The chain is Probable phosphatidylinositol 3,4,5-trisphosphate 3-phosphatase TEP1 (TEP1) from Saccharomyces cerevisiae (strain ATCC 204508 / S288c) (Baker's yeast).